Reading from the N-terminus, the 322-residue chain is MNFVNNLFTLKKISIKNISFFRSIIRIETFNNSFCDSLGNFIKRVIFLTTNSYKIIYLKIYKIKSEFYDLPGIIENTQTILKNLDNIIIKINNDNVANLIIKKKGPCIITAKDIFSDKNITIFNPNKIIANVSNNIVFYCIMKCVNSLFKNYTDEFFQFKIFKENIIFLNNFKSPIISLNYYINKKIFNKKLKKLFFDIETNGSIKPVDCFKNCIFYIKKYFDLIFSFIGFKKYKKINVEKKNNLNLKINSVYLNSINNLKLSIRSLNCLKNNNIFLIGDLIKISKNNLINIPNLGKKSYNEILNSLKNFGLNLNSKIEYDL.

Residues Met-1 to Ile-229 are alpha N-terminal domain (alpha-NTD). The alpha C-terminal domain (alpha-CTD) stretch occupies residues Asn-244 to Leu-322.

It belongs to the RNA polymerase alpha chain family. As to quaternary structure, homodimer. The RNAP catalytic core consists of 2 alpha, 1 beta, 1 beta' and 1 omega subunit. When a sigma factor is associated with the core the holoenzyme is formed, which can initiate transcription.

The catalysed reaction is RNA(n) + a ribonucleoside 5'-triphosphate = RNA(n+1) + diphosphate. Its function is as follows. DNA-dependent RNA polymerase catalyzes the transcription of DNA into RNA using the four ribonucleoside triphosphates as substrates. This Carsonella ruddii (strain PV) protein is DNA-directed RNA polymerase subunit alpha (rpoA).